Consider the following 271-residue polypeptide: Virulence regulon transcriptional activator VirF (271 aa).

The HTH araC/xylS-type domain maps to 167-265 (ERLQKFMEEN…GCTPSQARLT (99 aa)). DNA-binding regions (H-T-H motif) lie at residues 184-205 (SKFA…GTVY) and 232-255 (IVDI…RRRF).

In terms of biological role, transcriptional activator of the Yersinia virulence regulon. This is Virulence regulon transcriptional activator VirF (virF) from Yersinia enterocolitica serotype O:8 / biotype 1B (strain NCTC 13174 / 8081).